The sequence spans 287 residues: 4-hydroxybenzoate octaprenyltransferase (287 aa).

7 consecutive transmembrane segments (helical) span residues 30-50 (ALWI…FALG), 92-112 (IAIA…LNGL), 133-153 (FFAI…PMAF), 158-178 (DTVP…SVAY), 207-227 (VLAI…LGAA), 232-252 (WPYW…YTLI), and 266-286 (HNNW…ALAV).

This sequence belongs to the UbiA prenyltransferase family. It depends on Mg(2+) as a cofactor.

Its subcellular location is the cell inner membrane. It carries out the reaction all-trans-octaprenyl diphosphate + 4-hydroxybenzoate = 4-hydroxy-3-(all-trans-octaprenyl)benzoate + diphosphate. It functions in the pathway cofactor biosynthesis; ubiquinone biosynthesis. Catalyzes the prenylation of para-hydroxybenzoate (PHB) with an all-trans polyprenyl group. Mediates the second step in the final reaction sequence of ubiquinone-8 (UQ-8) biosynthesis, which is the condensation of the polyisoprenoid side chain with PHB, generating the first membrane-bound Q intermediate 3-octaprenyl-4-hydroxybenzoate. This Burkholderia mallei (strain NCTC 10247) protein is 4-hydroxybenzoate octaprenyltransferase.